The chain runs to 145 residues: Large ribosomal subunit protein uL11 (145 aa).

It belongs to the universal ribosomal protein uL11 family. Part of the ribosomal stalk of the 50S ribosomal subunit. Interacts with L10 and the large rRNA to form the base of the stalk. L10 forms an elongated spine to which L12 dimers bind in a sequential fashion forming a multimeric L10(L12)X complex. One or more lysine residues are methylated.

Its function is as follows. Forms part of the ribosomal stalk which helps the ribosome interact with GTP-bound translation factors. The sequence is that of Large ribosomal subunit protein uL11 from Rickettsia akari (strain Hartford).